The following is a 427-amino-acid chain: Phosphoribosylamine--glycine ligase (427 aa).

One can recognise an ATP-grasp domain in the interval 107–312 (KDLCARFNIP…LLALVNAAVD (206 aa)). Residue 133 to 193 (IRQQGAPIVV…EEFLDGEEAS (61 aa)) coordinates ATP. Glu282 and Asn284 together coordinate Mg(2+).

It belongs to the GARS family. Mg(2+) is required as a cofactor. Mn(2+) serves as cofactor.

It catalyses the reaction 5-phospho-beta-D-ribosylamine + glycine + ATP = N(1)-(5-phospho-beta-D-ribosyl)glycinamide + ADP + phosphate + H(+). Its pathway is purine metabolism; IMP biosynthesis via de novo pathway; N(1)-(5-phospho-D-ribosyl)glycinamide from 5-phospho-alpha-D-ribose 1-diphosphate: step 2/2. This chain is Phosphoribosylamine--glycine ligase, found in Brucella melitensis biotype 1 (strain ATCC 23456 / CCUG 17765 / NCTC 10094 / 16M).